A 434-amino-acid polypeptide reads, in one-letter code: Histidinol dehydrogenase (434 aa).

Residues Tyr-130, Gln-192, and Asn-215 each coordinate NAD(+). Residues Ser-238, Gln-260, and His-263 each contribute to the substrate site. Gln-260 and His-263 together coordinate Zn(2+). Catalysis depends on proton acceptor residues Glu-328 and His-329. Substrate is bound by residues His-329, Asp-362, Glu-416, and His-421. Asp-362 is a binding site for Zn(2+). His-421 contributes to the Zn(2+) binding site.

Belongs to the histidinol dehydrogenase family. Requires Zn(2+) as cofactor.

The catalysed reaction is L-histidinol + 2 NAD(+) + H2O = L-histidine + 2 NADH + 3 H(+). The protein operates within amino-acid biosynthesis; L-histidine biosynthesis; L-histidine from 5-phospho-alpha-D-ribose 1-diphosphate: step 9/9. Catalyzes the sequential NAD-dependent oxidations of L-histidinol to L-histidinaldehyde and then to L-histidine. The protein is Histidinol dehydrogenase of Synechococcus sp. (strain ATCC 27144 / PCC 6301 / SAUG 1402/1) (Anacystis nidulans).